The sequence spans 452 residues: ADP-dependent glucose/glucosamine kinase (452 aa).

The ADPK domain maps to methionine 1–serine 452. D-glucose contacts are provided by residues aspartate 33, glutamate 87, glycine 111 to glutamine 112, and histidine 174. Glutamate 264 is a Mg(2+) binding site. An ADP-binding site is contributed by asparagine 290. Glutamate 293 is a binding site for Mg(2+). ADP is bound by residues histidine 339–threonine 340, valine 426, and glycine 436. Aspartate 437 is a D-glucose binding site. Aspartate 437 provides a ligand contact to Mg(2+). Aspartate 437 acts as the Proton acceptor in catalysis.

This sequence belongs to the ADP-dependent glucokinase family. Mg(2+) is required as a cofactor.

The protein resides in the cytoplasm. It carries out the reaction D-glucose + ADP = D-glucose 6-phosphate + AMP + H(+). The catalysed reaction is D-glucosamine + ADP = D-glucosamine 6-phosphate + AMP + H(+). It functions in the pathway carbohydrate degradation; glycolysis. Its function is as follows. Catalyzes the ADP-dependent phosphorylation of D-glucose to D-glucose 6-phosphate and glucosamine to glucosamine 6-phosphate. This chain is ADP-dependent glucose/glucosamine kinase, found in Pyrococcus abyssi (strain GE5 / Orsay).